The following is a 285-amino-acid chain: Acetyl-coenzyme A carboxylase carboxyl transferase subunit beta (285 aa).

In terms of domain architecture, CoA carboxyltransferase N-terminal spans 29–285 (IMTKCPKCKK…ILKIHQEVTK (257 aa)). 4 residues coordinate Zn(2+): C33, C36, C52, and C55. A C4-type zinc finger spans residues 33 to 55 (CPKCKKIMYTKELAENLNVCFNC).

Belongs to the AccD/PCCB family. Acetyl-CoA carboxylase is a heterohexamer composed of biotin carboxyl carrier protein (AccB), biotin carboxylase (AccC) and two subunits each of ACCase subunit alpha (AccA) and ACCase subunit beta (AccD). Zn(2+) is required as a cofactor.

It is found in the cytoplasm. The catalysed reaction is N(6)-carboxybiotinyl-L-lysyl-[protein] + acetyl-CoA = N(6)-biotinyl-L-lysyl-[protein] + malonyl-CoA. It participates in lipid metabolism; malonyl-CoA biosynthesis; malonyl-CoA from acetyl-CoA: step 1/1. Component of the acetyl coenzyme A carboxylase (ACC) complex. Biotin carboxylase (BC) catalyzes the carboxylation of biotin on its carrier protein (BCCP) and then the CO(2) group is transferred by the transcarboxylase to acetyl-CoA to form malonyl-CoA. This Staphylococcus aureus (strain Newman) protein is Acetyl-coenzyme A carboxylase carboxyl transferase subunit beta.